Here is a 105-residue protein sequence, read N- to C-terminus: Small ribosomal subunit protein uS17 (105 aa).

The protein belongs to the universal ribosomal protein uS17 family. Part of the 30S ribosomal subunit.

In terms of biological role, one of the primary rRNA binding proteins, it binds specifically to the 5'-end of 16S ribosomal RNA. This chain is Small ribosomal subunit protein uS17, found in Thermus aquaticus.